A 432-amino-acid polypeptide reads, in one-letter code: Adenylosuccinate synthetase 2 (432 aa).

Residues 13 to 19 and 41 to 43 each bind GTP; these read GDEGKGK and GHT. Asp-14 (proton acceptor) is an active-site residue. Residues Asp-14 and Gly-41 each coordinate Mg(2+). IMP-binding positions include 14-17, 39-42, Thr-130, Arg-144, Gln-225, Thr-240, and Arg-304; these read DEGK and NAGH. His-42 (proton donor) is an active-site residue. 300–306 is a binding site for substrate; the sequence is ATTGRSR. GTP contacts are provided by residues Arg-306, 332–334, and 415–417; these read KLD and STG.

Belongs to the adenylosuccinate synthetase family. As to quaternary structure, homodimer. Requires Mg(2+) as cofactor.

The protein resides in the cytoplasm. The catalysed reaction is IMP + L-aspartate + GTP = N(6)-(1,2-dicarboxyethyl)-AMP + GDP + phosphate + 2 H(+). It functions in the pathway purine metabolism; AMP biosynthesis via de novo pathway; AMP from IMP: step 1/2. Functionally, plays an important role in the de novo pathway of purine nucleotide biosynthesis. Catalyzes the first committed step in the biosynthesis of AMP from IMP. This chain is Adenylosuccinate synthetase 2, found in Photorhabdus laumondii subsp. laumondii (strain DSM 15139 / CIP 105565 / TT01) (Photorhabdus luminescens subsp. laumondii).